Reading from the N-terminus, the 189-residue chain is MLLSDRDIRAEISVGRLGIDPFDDSMVQPSSVDVRLDGLFRVFNNTRYTHIDPALRQDELTSLVEPAEGEPFVLHPGEFVLGSTLEVCSLPNDLAGRLEGKSSLGRLGLLTHSTAGFIDPGFSGHITLELSNVANLPITLWPGMKIGQLCLLKLSSAAEFPYGSSEAGSKYQGQRGPTPSKAYLNFNRS.

DCTP-binding positions include 101–106 (KSSLGR), aspartate 119, 127–129 (TLE), glutamine 148, tyrosine 162, and glutamine 174. Catalysis depends on glutamate 129, which acts as the Proton donor/acceptor. Residues 163–189 (GSSEAGSKYQGQRGPTPSKAYLNFNRS) are disordered.

It belongs to the dCTP deaminase family. As to quaternary structure, homotrimer.

The catalysed reaction is dCTP + 2 H2O = dUMP + NH4(+) + diphosphate. The protein operates within pyrimidine metabolism; dUMP biosynthesis; dUMP from dCTP: step 1/1. In terms of biological role, bifunctional enzyme that catalyzes both the deamination of dCTP to dUTP and the hydrolysis of dUTP to dUMP without releasing the toxic dUTP intermediate. This is dCTP deaminase, dUMP-forming from Rhodococcus erythropolis (strain PR4 / NBRC 100887).